The following is a 102-amino-acid chain: S-phase delaying protein 2 (102 aa).

Positions 43-62 (FPSYHKDQTDRNELPQQKHD) are disordered. Residues 46 to 62 (YHKDQTDRNELPQQKHD) are compositionally biased toward basic and acidic residues.

The protein belongs to the DIF1/spd1 family.

It is found in the cytoplasm. The protein localises to the nucleus. Its function is as follows. Regulates the ribonucleotide reductase activity. The protein is S-phase delaying protein 2 (spd2) of Schizosaccharomyces pombe (strain 972 / ATCC 24843) (Fission yeast).